The sequence spans 254 residues: Undecaprenyl-diphosphatase (254 aa).

Transmembrane regions (helical) follow at residues 1 to 21, 41 to 61, 70 to 90, 97 to 117, 134 to 154, 175 to 195, 209 to 229, and 234 to 254; these read MDIIQAIIIGIIEGFTEFLPI, LTKAYEVIIQFAAILAVMLIY, IDLWMKLLFAFLPLAIVGFIF, LFNVQVVAWMFIIGGIIFLIV, VSWTQAWWVGFAQIFSLIPGT, AEFSFLLAIPVMAVVSGYDLL, FLIGFIVAFIVAYATIKLFLV, and FTFVAFGIYRIIFGIFLLMIL.

The protein belongs to the UppP family.

Its subcellular location is the cell inner membrane. It catalyses the reaction di-trans,octa-cis-undecaprenyl diphosphate + H2O = di-trans,octa-cis-undecaprenyl phosphate + phosphate + H(+). Functionally, catalyzes the dephosphorylation of undecaprenyl diphosphate (UPP). Confers resistance to bacitracin. This chain is Undecaprenyl-diphosphatase, found in Sulfurovum sp. (strain NBC37-1).